The sequence spans 438 residues: Phosphoribosylamine--glycine ligase (438 aa).

Residues 108 to 316 (REFMERNNIP…LLEIAKGIVE (209 aa)) form the ATP-grasp domain. Residue 135–194 (IDEYGKPVVVKPLGLTGGKGVKVVGYQLKDNEEAKEYAEHIIRKDGKVLIEERTDGVEFT) coordinates ATP. Residues Gln-274, Glu-286, and Asn-288 each coordinate Mg(2+). Gln-274, Glu-286, and Asn-288 together coordinate Mn(2+).

This sequence belongs to the GARS family. It depends on Mg(2+) as a cofactor. Requires Mn(2+) as cofactor.

It catalyses the reaction 5-phospho-beta-D-ribosylamine + glycine + ATP = N(1)-(5-phospho-beta-D-ribosyl)glycinamide + ADP + phosphate + H(+). Its pathway is purine metabolism; IMP biosynthesis via de novo pathway; N(1)-(5-phospho-D-ribosyl)glycinamide from 5-phospho-alpha-D-ribose 1-diphosphate: step 2/2. This Pyrococcus horikoshii (strain ATCC 700860 / DSM 12428 / JCM 9974 / NBRC 100139 / OT-3) protein is Phosphoribosylamine--glycine ligase.